The sequence spans 430 residues: Dihydroorotase (430 aa).

The Zn(2+) site is built by His-60 and His-62. Residues 62–64 (HLR) and Asn-94 contribute to the substrate site. Residues Asp-152, His-179, His-232, and Asp-305 each contribute to the Zn(2+) site. Residue Asp-305 is part of the active site. Substrate contacts are provided by residues His-309 and 323 to 324 (FG).

The protein belongs to the metallo-dependent hydrolases superfamily. DHOase family. Class I DHOase subfamily. Zn(2+) serves as cofactor.

The enzyme catalyses (S)-dihydroorotate + H2O = N-carbamoyl-L-aspartate + H(+). It participates in pyrimidine metabolism; UMP biosynthesis via de novo pathway; (S)-dihydroorotate from bicarbonate: step 3/3. Functionally, catalyzes the reversible cyclization of carbamoyl aspartate to dihydroorotate. The protein is Dihydroorotase of Solibacter usitatus (strain Ellin6076).